We begin with the raw amino-acid sequence, 447 residues long: MERKMYKSTVFPICCLLFALFDRGNALYGSSSPVLQLTPSNFKSKVLNSNGVVLVEFFAPWCGHCQSLTPTWEKVASTLKGIATVAAIDADAHKSVSQDYGVRGFPTIKVFVPGKPPIDYQGARDAKSISQFAIKQIKALLKDRLDGKTSGTKNGGGSSEKKKSEPSASVELNSSNFDELVTESKELWIVEFFAPWCGHCKKLAPEWKKAANNLKGKVKLGHVNCDAEQSIKSRFKVQGFPTILVFGSDKSSPVPYEGARSASAIESFALEQLESNAGPAEVTELTGPDVMEDKCGSAAICFVSFLPDILDSKAEGRNKYLEMLLSVADKFKKDPYGFVWVAAGKQPDLEKRVGVGGYGYPAMVALNAKKGAYAPLKSGFEVKHLKDFVKEAAKGGKGNLPIDGTMEIVKTEAWDGKDGEVVDADEFSLEDLMGNDDEASTESKDDL.

Residues 1-26 (MERKMYKSTVFPICCLLFALFDRGNA) form the signal peptide. 2 consecutive Thioredoxin domains span residues 27 to 139 (LYGS…QIKA) and 161 to 275 (KKKS…QLES). Residues Cys62 and Cys65 each act as nucleophile in the active site. Residues Cys62 and Cys65 are joined by a disulfide bond. A disordered region spans residues 146–170 (DGKTSGTKNGGGSSEKKKSEPSASV). Asn173 carries N-linked (GlcNAc...) asparagine glycosylation. Active-site nucleophile residues include Cys197 and Cys200. Cys197 and Cys200 form a disulfide bridge. Residues 444–447 (KDDL) carry the Prevents secretion from ER motif.

It belongs to the protein disulfide isomerase family. Widely expressed.

It is found in the endoplasmic reticulum lumen. It carries out the reaction Catalyzes the rearrangement of -S-S- bonds in proteins.. Its function is as follows. Acts as a protein-folding catalyst that interacts with nascent polypeptides to catalyze the formation, isomerization, and reduction or oxidation of disulfide bonds. This is Protein disulfide-isomerase like 2-2 (PDIL2-2) from Arabidopsis thaliana (Mouse-ear cress).